The chain runs to 467 residues: NALCN channel auxiliary factor 1 (467 aa).

Residues 40–60 (LSLASLLFFTVLLSDHLWFCA) traverse the membrane as a helical segment. Residues 121–161 (MGESSPAAQAHRLLSASSSPTLPPSPGGGGGSKGNRGKNNR) form a disordered region. Residues asparagine 160, asparagine 226, and asparagine 254 are each glycosylated (N-linked (GlcNAc...) asparagine). Disulfide bonds link cysteine 200–cysteine 270, cysteine 235–cysteine 322, cysteine 255–cysteine 270, cysteine 313–cysteine 350, cysteine 333–cysteine 386, cysteine 339–cysteine 385, and cysteine 343–cysteine 370. Residues 390–408 (SEEQTAPRPKGTVDRRDSC) are compositionally biased toward basic and acidic residues. Residues 390–409 (SEEQTAPRPKGTVDRRDSCP) form a disordered region. Residues 426 to 446 (LKLCVLVLILLHTVLTASAAQ) traverse the membrane as a helical segment. N-linked (GlcNAc...) asparagine glycosylation occurs at asparagine 462.

This sequence belongs to the NALF family. Component of the NALCN channel complex. NALCN complex consists of NALCN and auxiliary subunits, UNC79, UNC80 and NACL1. These auxiliary subunits are essential for the NALCN channel function.

It localises to the cell membrane. Auxillary component of the NALCN sodium channel complex, a channel that regulates the resting membrane potential and controls neuronal excitability. In Mus musculus (Mouse), this protein is NALCN channel auxiliary factor 1.